Consider the following 320-residue polypeptide: MARNKIALIGSGMIGGTLAHLAGLKELGDIVLFDIADGIPQGKGLDIAQSSPVEGFDANLTGASDYSAIEGADVCIVTAGVARKPGMSRDDLLGINLKVMEQVGAGIKKYAPNAFVICITNPLDAMVWALQKFSGLPANKVVGMAGVLDSSRFRLFLAKEFNVSVEDVTAFVLGGHGDSMVPLARYSTVAGIPLTDLVTMGWLTAERLEEIIQRTRDGGAEIVGLLKTGSAYYAPAASAIAMAESYLKDKKRVLPCAAHLDGQYGVKDMYVGVPTVIGAGGIERIIEIDLNKAEKEAFDKSVASVAGLCEACITIAPSLK.

NAD(+) contacts are provided by residues 10-15 (GSGMIG) and Asp34. Substrate contacts are provided by Arg83 and Arg89. NAD(+)-binding positions include Asn96 and 119 to 121 (ITN). Substrate-binding residues include Asn121 and Arg152. His176 serves as the catalytic Proton acceptor.

Belongs to the LDH/MDH superfamily. MDH type 3 family.

It carries out the reaction (S)-malate + NAD(+) = oxaloacetate + NADH + H(+). In terms of biological role, catalyzes the reversible oxidation of malate to oxaloacetate. The chain is Malate dehydrogenase from Rhizobium rhizogenes (strain K84 / ATCC BAA-868) (Agrobacterium radiobacter).